Here is a 292-residue protein sequence, read N- to C-terminus: Acetylglutamate kinase (292 aa).

Residues 60–61 (GG), R82, and N187 contribute to the substrate site.

This sequence belongs to the acetylglutamate kinase family. ArgB subfamily.

Its subcellular location is the cytoplasm. It catalyses the reaction N-acetyl-L-glutamate + ATP = N-acetyl-L-glutamyl 5-phosphate + ADP. Its pathway is amino-acid biosynthesis; L-arginine biosynthesis; N(2)-acetyl-L-ornithine from L-glutamate: step 2/4. Functionally, catalyzes the ATP-dependent phosphorylation of N-acetyl-L-glutamate. The sequence is that of Acetylglutamate kinase from Methanobrevibacter smithii (strain ATCC 35061 / DSM 861 / OCM 144 / PS).